The primary structure comprises 100 residues: Integration host factor subunit alpha 2 (100 aa).

This sequence belongs to the bacterial histone-like protein family. Heterodimer of an alpha and a beta chain.

This protein is one of the two subunits of integration host factor, a specific DNA-binding protein that functions in genetic recombination as well as in transcriptional and translational control. In Dechloromonas aromatica (strain RCB), this protein is Integration host factor subunit alpha 2.